The primary structure comprises 270 residues: Decarboxylase NovR (270 aa).

It belongs to the aldolase class II family.

It participates in antibiotic biosynthesis; novobiocin biosynthesis. Functionally, may mediate the 2 consecutive oxidative decarboxylation steps in the biosynthesis of the prenylated hydroxybenzoic acid moiety of novobiocin, an aminocoumarin family antibiotic that targets bacterial DNA gyrases. The polypeptide is Decarboxylase NovR (novR) (Streptomyces niveus (Streptomyces spheroides)).